Here is a 651-residue protein sequence, read N- to C-terminus: Acetyl-coenzyme A synthetase (651 aa).

Residues 190-193 (RRGK) and Thr311 each bind CoA. ATP-binding positions include 387-389 (GEP), 411-416 (DTWWQT), Asp508, and Arg523. Ser531 lines the CoA pocket. Residue Arg534 participates in ATP binding. Val545, His547, and Val550 together coordinate Mg(2+). N6-acetyllysine is present on Lys617.

The protein belongs to the ATP-dependent AMP-binding enzyme family. The cofactor is Mg(2+). Post-translationally, acetylated. Deacetylation by the SIR2-homolog deacetylase activates the enzyme.

It catalyses the reaction acetate + ATP + CoA = acetyl-CoA + AMP + diphosphate. Functionally, catalyzes the conversion of acetate into acetyl-CoA (AcCoA), an essential intermediate at the junction of anabolic and catabolic pathways. AcsA undergoes a two-step reaction. In the first half reaction, AcsA combines acetate with ATP to form acetyl-adenylate (AcAMP) intermediate. In the second half reaction, it can then transfer the acetyl group from AcAMP to the sulfhydryl group of CoA, forming the product AcCoA. M.tuberculosis may use AcsA for both acetate and propionate assimilation. The chain is Acetyl-coenzyme A synthetase from Mycobacterium tuberculosis (strain CDC 1551 / Oshkosh).